The sequence spans 255 residues: Acetylglutamate kinase (255 aa).

Substrate-binding positions include 40-41 (GG), Arg62, and Asn157.

This sequence belongs to the acetylglutamate kinase family. ArgB subfamily.

The protein localises to the cytoplasm. The enzyme catalyses N-acetyl-L-glutamate + ATP = N-acetyl-L-glutamyl 5-phosphate + ADP. It functions in the pathway amino-acid biosynthesis; L-arginine biosynthesis; N(2)-acetyl-L-ornithine from L-glutamate: step 2/4. Functionally, catalyzes the ATP-dependent phosphorylation of N-acetyl-L-glutamate. This is Acetylglutamate kinase from Parabacteroides distasonis (strain ATCC 8503 / DSM 20701 / CIP 104284 / JCM 5825 / NCTC 11152).